The sequence spans 734 residues: Photosystem I P700 chlorophyll a apoprotein A2 (734 aa).

Helical transmembrane passes span 46-69, 135-158, 175-199, 273-291, 330-353, 369-395, 417-439, and 517-535; these read IFASHFGQLAIIFLWTSGNLFHVA, LYTGAIFLLFLSFISLLAGWLHLQ, LNHHLSGLFGVSSLAWAGHLVHVAI, VAHHHLAIAFLFLIGGLMY, IHFQLGLALASLGVITSLVAQHMY, AALYTHHQYIAGFIMTGAFAHGPIFFI, AIISHLSWASLFLGFHTLGLYVH, and FLVHHAIALGLHTTTLILV. The [4Fe-4S] cluster site is built by cysteine 559 and cysteine 568. The next 2 helical transmembrane spans lie at 575–596 and 643–665; these read DFYLAVFWMLNTIGWVTFYWHW and LSVWAWMFLFGHLVWATGFMFLI. Chlorophyll a is bound by residues histidine 654, methionine 662, and tyrosine 670. Tryptophan 671 serves as a coordination point for phylloquinone. The helical transmembrane segment at 707-727 threads the bilayer; it reads LVGLVHFSVGYIFTYAAFLIA.

Belongs to the PsaA/PsaB family. As to quaternary structure, the PsaA/B heterodimer binds the P700 chlorophyll special pair and subsequent electron acceptors. PSI consists of a core antenna complex that captures photons, and an electron transfer chain that converts photonic excitation into a charge separation. The eukaryotic PSI reaction center is composed of at least 11 subunits. P700 is a chlorophyll a/chlorophyll a' dimer, A0 is one or more chlorophyll a, A1 is one or both phylloquinones and FX is a shared 4Fe-4S iron-sulfur center. serves as cofactor.

It is found in the plastid. Its subcellular location is the chloroplast thylakoid membrane. It catalyses the reaction reduced [plastocyanin] + hnu + oxidized [2Fe-2S]-[ferredoxin] = oxidized [plastocyanin] + reduced [2Fe-2S]-[ferredoxin]. PsaA and PsaB bind P700, the primary electron donor of photosystem I (PSI), as well as the electron acceptors A0, A1 and FX. PSI is a plastocyanin-ferredoxin oxidoreductase, converting photonic excitation into a charge separation, which transfers an electron from the donor P700 chlorophyll pair to the spectroscopically characterized acceptors A0, A1, FX, FA and FB in turn. Oxidized P700 is reduced on the lumenal side of the thylakoid membrane by plastocyanin. The polypeptide is Photosystem I P700 chlorophyll a apoprotein A2 (Pisum sativum (Garden pea)).